Reading from the N-terminus, the 204-residue chain is Methylthioribulose-1-phosphate dehydratase (204 aa).

The Zn(2+) site is built by histidine 94 and histidine 96.

It belongs to the aldolase class II family. MtnB subfamily. Zn(2+) is required as a cofactor.

It carries out the reaction 5-(methylsulfanyl)-D-ribulose 1-phosphate = 5-methylsulfanyl-2,3-dioxopentyl phosphate + H2O. It participates in amino-acid biosynthesis; L-methionine biosynthesis via salvage pathway; L-methionine from S-methyl-5-thio-alpha-D-ribose 1-phosphate: step 2/6. In terms of biological role, catalyzes the dehydration of methylthioribulose-1-phosphate (MTRu-1-P) into 2,3-diketo-5-methylthiopentyl-1-phosphate (DK-MTP-1-P). The sequence is that of Methylthioribulose-1-phosphate dehydratase from Citrobacter koseri (strain ATCC BAA-895 / CDC 4225-83 / SGSC4696).